Consider the following 220-residue polypeptide: Protein-methionine-sulfoxide reductase heme-binding subunit MsrQ (220 aa).

The next 5 membrane-spanning stretches (helical) occupy residues 20–40 (IWLL…LGAS), 52–72 (EHTL…VTPI), 86–106 (ALGL…MVLD), 122–142 (PFIT…LTSN), and 159–179 (LVYV…KSWP).

It belongs to the MsrQ family. As to quaternary structure, heterodimer of a catalytic subunit (MsrP) and a heme-binding subunit (MsrQ). FMN serves as cofactor. Heme b is required as a cofactor.

Its subcellular location is the cell inner membrane. Functionally, part of the MsrPQ system that repairs oxidized periplasmic proteins containing methionine sulfoxide residues (Met-O), using respiratory chain electrons. Thus protects these proteins from oxidative-stress damage caused by reactive species of oxygen and chlorine generated by the host defense mechanisms. MsrPQ is essential for the maintenance of envelope integrity under bleach stress, rescuing a wide series of structurally unrelated periplasmic proteins from methionine oxidation. MsrQ provides electrons for reduction to the reductase catalytic subunit MsrP, using the quinone pool of the respiratory chain. The polypeptide is Protein-methionine-sulfoxide reductase heme-binding subunit MsrQ (Brucella anthropi (strain ATCC 49188 / DSM 6882 / CCUG 24695 / JCM 21032 / LMG 3331 / NBRC 15819 / NCTC 12168 / Alc 37) (Ochrobactrum anthropi)).